A 291-amino-acid chain; its full sequence is Probable plasmid-partitioning protein ParB (291 aa).

Belongs to the ParB family.

The protein is Probable plasmid-partitioning protein ParB of Deinococcus radiodurans (strain ATCC 13939 / DSM 20539 / JCM 16871 / CCUG 27074 / LMG 4051 / NBRC 15346 / NCIMB 9279 / VKM B-1422 / R1).